Here is a 136-residue protein sequence, read N- to C-terminus: Large ribosomal subunit protein uL16 (136 aa).

The protein belongs to the universal ribosomal protein uL16 family. In terms of assembly, part of the 50S ribosomal subunit.

Binds 23S rRNA and is also seen to make contacts with the A and possibly P site tRNAs. This Rickettsia peacockii (strain Rustic) protein is Large ribosomal subunit protein uL16.